A 1037-amino-acid chain; its full sequence is Caspase recruitment domain-containing protein 6 (1037 aa).

N-acetylalanine is present on Ala2. The CARD domain maps to 3–94; the sequence is TESTPSEIIE…QSAAICGLRH (92 aa). Ser154 carries the post-translational modification Phosphoserine. Disordered stretches follow at residues 235–270, 669–704, and 887–1037; these read DPEHVGYDGEEDFENSETTEFSGEEPSYEGSETSLS, VSSGENMAGTAEGEGQQRHSQLKSSSKSQALMPIQE, and RTSH…GGKH. A compositionally biased stretch (acidic residues) spans 242-261; it reads DGEEDFENSETTEFSGEEPS. Positions 690-699 are enriched in low complexity; sequence LKSSSKSQAL. Composition is skewed to polar residues over residues 911–928, 938–954, and 963–984; these read ASQQGVQMKTQGGASNPA, KSSQFKSDQSNPSTVKH, and VPSQPKSSQTKSCQSQPSQTKP. At Ser985 the chain carries Phosphoserine. Pro residues predominate over residues 994 to 1012; it reads PSQPWPPQSKPSQPRPPQP. Residues 1023–1037 are compositionally biased toward basic residues; it reads KAHHSKAGQKRGGKH.

May be involved in apoptosis. This chain is Caspase recruitment domain-containing protein 6 (CARD6), found in Homo sapiens (Human).